The primary structure comprises 121 residues: Cell division protein FtsB (121 aa).

The Cytoplasmic portion of the chain corresponds to methionine 1–tryptophan 6. A helical transmembrane segment spans residues leucine 7–phenylalanine 24. Over glycine 25–proline 121 the chain is Periplasmic. The stretch at glutamate 31–glycine 66 forms a coiled coil. The tract at residues glutamate 92–proline 121 is disordered. A compositionally biased stretch (pro residues) spans leucine 96–isoleucine 115.

This sequence belongs to the FtsB family. In terms of assembly, part of a complex composed of FtsB, FtsL and FtsQ.

The protein localises to the cell inner membrane. Essential cell division protein. May link together the upstream cell division proteins, which are predominantly cytoplasmic, with the downstream cell division proteins, which are predominantly periplasmic. This is Cell division protein FtsB from Xanthomonas euvesicatoria pv. vesicatoria (strain 85-10) (Xanthomonas campestris pv. vesicatoria).